Consider the following 485-residue polypeptide: Ribulose bisphosphate carboxylase large chain (485 aa).

Substrate contacts are provided by Asn-124 and Thr-174. Residue Lys-176 is the Proton acceptor of the active site. Residue Lys-178 participates in substrate binding. Mg(2+) contacts are provided by Lys-202, Asp-204, and Glu-205. Lys-202 carries the post-translational modification N6-carboxylysine. Catalysis depends on His-294, which acts as the Proton acceptor. Substrate contacts are provided by Arg-295, His-327, and Ser-379.

This sequence belongs to the RuBisCO large chain family. Type I subfamily. In terms of assembly, heterohexadecamer of 8 large chains and 8 small chains. It depends on Mg(2+) as a cofactor.

It catalyses the reaction 2 (2R)-3-phosphoglycerate + 2 H(+) = D-ribulose 1,5-bisphosphate + CO2 + H2O. The catalysed reaction is D-ribulose 1,5-bisphosphate + O2 = 2-phosphoglycolate + (2R)-3-phosphoglycerate + 2 H(+). RuBisCO catalyzes two reactions: the carboxylation of D-ribulose 1,5-bisphosphate, the primary event in carbon dioxide fixation, as well as the oxidative fragmentation of the pentose substrate. Both reactions occur simultaneously and in competition at the same active site. The chain is Ribulose bisphosphate carboxylase large chain from Rhodopseudomonas palustris (strain BisA53).